We begin with the raw amino-acid sequence, 95 residues long: Homeotic protein bicoid (95 aa).

Disordered regions lie at residues 1–29 and 42–63; these read NLEP…STGM and GKPS…MMHD.

Belongs to the paired homeobox family. Bicoid subfamily.

The protein localises to the nucleus. Its function is as follows. Bicoid is polarity protein that provides positional cues for the development of head and thoracic segments. BCD regulates the expression of zygotic genes, possibly through its homeodomain, and inhibits the activity of other maternal gene products. The sequence is that of Homeotic protein bicoid (bcd) from Drosophila subobscura (Fruit fly).